The following is a 156-amino-acid chain: Small ribosomal subunit protein uS7 (156 aa).

This sequence belongs to the universal ribosomal protein uS7 family. In terms of assembly, part of the 30S ribosomal subunit. Contacts proteins S9 and S11.

In terms of biological role, one of the primary rRNA binding proteins, it binds directly to 16S rRNA where it nucleates assembly of the head domain of the 30S subunit. Is located at the subunit interface close to the decoding center, probably blocks exit of the E-site tRNA. This chain is Small ribosomal subunit protein uS7, found in Pseudomonas aeruginosa (strain LESB58).